We begin with the raw amino-acid sequence, 750 residues long: Neprilysin (750 aa).

The span at 1 to 14 shows a compositional bias: polar residues; that stretch reads MGKSESQMDITDIN. Positions 1–20 are disordered; sequence MGKSESQMDITDINTPKPKK. Glycine 2 carries the N-myristoyl glycine lipid modification. Residues 2-28 are Cytoplasmic-facing; that stretch reads GKSESQMDITDINTPKPKKKQRWTPLE. Residues serine 4 and serine 6 each carry the phosphoserine modification. Residues 16-23 carry the Stop-transfer sequence motif; it reads PKPKKKQR. A helical; Signal-anchor for type II membrane protein transmembrane segment spans residues 29-51; that stretch reads ISLSVLVLLLTIIAVTMIALYAT. Over 52 to 750 the chain is Extracellular; the sequence is YDDGICKSSD…MNPEKKCRVW (699 aa). Residues 56 to 750 form the Peptidase M13 domain; it reads ICKSSDCIKS…MNPEKKCRVW (695 aa). Cystine bridges form between cysteine 57/cysteine 62, cysteine 80/cysteine 735, cysteine 88/cysteine 695, cysteine 143/cysteine 411, cysteine 234/cysteine 242, and cysteine 621/cysteine 747. Arginine 103 provides a ligand contact to a peptide. A glycan (N-linked (GlcNAc...) asparagine) is linked at asparagine 145. Asparagine 285, asparagine 311, asparagine 325, and asparagine 335 each carry an N-linked (GlcNAc...) asparagine glycan. Histidine 584 provides a ligand contact to Zn(2+). Glutamate 585 is an active-site residue. Zn(2+) is bound at residue histidine 588. Asparagine 628 carries N-linked (GlcNAc...) asparagine glycosylation. Zn(2+) is bound at residue glutamate 647. Aspartate 651 serves as the catalytic Proton donor.

The protein belongs to the peptidase M13 family. Requires Zn(2+) as cofactor. Myristoylation is a determinant of membrane targeting. Post-translationally, glycosylation at Asn-628 is necessary both for surface expression and neutral endopeptidase activity.

It is found in the cell membrane. It carries out the reaction Preferential cleavage of polypeptides between hydrophobic residues, particularly with Phe or Tyr at P1'.. The enzyme catalyses substance P + H2O = substance P(1-9) + L-Leu-L-Met-NH2. It catalyses the reaction substance P + H2O = substance P(1-7) + L-Phe-Gly-L-Leu-L-Met-NH2. The catalysed reaction is neurotensin + H2O = neurotensin(1-11) + L-isoleucyl-L-leucine. It carries out the reaction neurotensin + H2O = neurotensin(1-10) + L-tyrosyl-L-isoleucyl-L-leucine. Its function is as follows. Thermolysin-like specificity, but is almost confined on acting on polypeptides of up to 30 amino acids. Biologically important in the destruction of opioid peptides such as Met- and Leu-enkephalins by cleavage of a Gly-Phe bond. Catalyzes cleavage of bradykinin, substance P and neurotensin peptides. Able to cleave angiotensin-1, angiotensin-2 and angiotensin 1-9. Involved in the degradation of atrial natriuretic factor (ANF) and brain natriuretic factor (BNP(1-32)). Displays UV-inducible elastase activity toward skin preelastic and elastic fibers. The sequence is that of Neprilysin (MME) from Pongo abelii (Sumatran orangutan).